Reading from the N-terminus, the 776-residue chain is Probable exo-1,4-beta-xylosidase bxlB (776 aa).

Residues 1–23 (MVHLSPLLRPLAAFSFFTSLAST) form the signal peptide. N-linked (GlcNAc...) asparagine glycans are attached at residues N65 and N105. D291 is an active-site residue. N-linked (GlcNAc...) asparagine glycans are attached at residues N343, N410, N421, N462, N623, and N766.

It belongs to the glycosyl hydrolase 3 family.

It is found in the secreted. It catalyses the reaction Hydrolysis of (1-&gt;4)-beta-D-xylans, to remove successive D-xylose residues from the non-reducing termini.. It participates in glycan degradation; xylan degradation. Functionally, xylan 1,4-beta-xylosidase involved in the hydrolysis of xylan, a major structural heterogeneous polysaccharide found in plant biomass representing the second most abundant polysaccharide in the biosphere, after cellulose. In Aspergillus flavus (strain ATCC 200026 / FGSC A1120 / IAM 13836 / NRRL 3357 / JCM 12722 / SRRC 167), this protein is Probable exo-1,4-beta-xylosidase bxlB (bxlB).